Reading from the N-terminus, the 365-residue chain is Methylthioribose-1-phosphate isomerase (365 aa).

Substrate contacts are provided by residues 53–55 (RGA), Arg-90, and Gln-201. Asp-242 functions as the Proton donor in the catalytic mechanism. 252-253 (NK) is a binding site for substrate.

It belongs to the eIF-2B alpha/beta/delta subunits family. MtnA subfamily.

The enzyme catalyses 5-(methylsulfanyl)-alpha-D-ribose 1-phosphate = 5-(methylsulfanyl)-D-ribulose 1-phosphate. It functions in the pathway amino-acid biosynthesis; L-methionine biosynthesis via salvage pathway; L-methionine from S-methyl-5-thio-alpha-D-ribose 1-phosphate: step 1/6. Catalyzes the interconversion of methylthioribose-1-phosphate (MTR-1-P) into methylthioribulose-1-phosphate (MTRu-1-P). This chain is Methylthioribose-1-phosphate isomerase, found in Methylorubrum populi (strain ATCC BAA-705 / NCIMB 13946 / BJ001) (Methylobacterium populi).